We begin with the raw amino-acid sequence, 187 residues long: MTALTGRPVVYCGVCSLPPEYCEYGGTVKKCQQWLEKNQPTMYSRIWSPEVLEAEMASLSVEAQERAMKDAKKKAAKAEAAEQKQADKRANSVVTIKRIERNKRKYVTSVSGLEAFGLELKKVAKDFGKKFATGSSVTKVPSGGEEIVVQGDVSGEIEEFILEKYKEVPEDNIELVEDKKKKKGEGN.

Positions 94 to 165 (VTIKRIERNK…EIEEFILEKY (72 aa)) constitute an SUI1 domain.

This sequence belongs to the DENR family. As to quaternary structure, interacts with the 40S ribosomal subunit.

It localises to the cytoplasm. The chain is Translation machinery-associated protein 22 (tma-22) from Neurospora crassa (strain ATCC 24698 / 74-OR23-1A / CBS 708.71 / DSM 1257 / FGSC 987).